Consider the following 159-residue polypeptide: 2-C-methyl-D-erythritol 2,4-cyclodiphosphate synthase (159 aa).

2 residues coordinate a divalent metal cation: Asp-8 and His-10. Residues 8–10 and 34–35 contribute to the 4-CDP-2-C-methyl-D-erythritol 2-phosphate site; these read DVH and HS. Residue His-42 coordinates a divalent metal cation. Residues 56 to 58, 61 to 65, 100 to 106, 132 to 135, Phe-139, and Arg-142 each bind 4-CDP-2-C-methyl-D-erythritol 2-phosphate; these read DIG, FPDTD, AQAPKML, and TTTE.

Belongs to the IspF family. In terms of assembly, homotrimer. A divalent metal cation serves as cofactor.

It catalyses the reaction 4-CDP-2-C-methyl-D-erythritol 2-phosphate = 2-C-methyl-D-erythritol 2,4-cyclic diphosphate + CMP. It participates in isoprenoid biosynthesis; isopentenyl diphosphate biosynthesis via DXP pathway; isopentenyl diphosphate from 1-deoxy-D-xylulose 5-phosphate: step 4/6. In terms of biological role, involved in the biosynthesis of isopentenyl diphosphate (IPP) and dimethylallyl diphosphate (DMAPP), two major building blocks of isoprenoid compounds. Catalyzes the conversion of 4-diphosphocytidyl-2-C-methyl-D-erythritol 2-phosphate (CDP-ME2P) to 2-C-methyl-D-erythritol 2,4-cyclodiphosphate (ME-CPP) with a corresponding release of cytidine 5-monophosphate (CMP). The protein is 2-C-methyl-D-erythritol 2,4-cyclodiphosphate synthase of Salmonella typhi.